The following is a 133-amino-acid chain: Small ribosomal subunit protein uS8 (133 aa).

Belongs to the universal ribosomal protein uS8 family. As to quaternary structure, part of the 30S ribosomal subunit. Contacts proteins S5 and S12.

In terms of biological role, one of the primary rRNA binding proteins, it binds directly to 16S rRNA central domain where it helps coordinate assembly of the platform of the 30S subunit. This is Small ribosomal subunit protein uS8 from Prochlorococcus marinus (strain MIT 9303).